A 508-amino-acid polypeptide reads, in one-letter code: Photosystem II CP47 reaction center protein (508 aa).

6 consecutive transmembrane segments (helical) span residues 21-36 (SVHIMHTALVAGWAGS), 101-115 (IVFSGLCFLAAIWHW), 140-156 (GIHLFLSGLACFGFGAF), 203-218 (IAAGTLGILAGLFHLS), 237-252 (VLSSSIAAVFFAAFVV), and 457-472 (SFALLFFFGHIWHGAR).

Belongs to the PsbB/PsbC family. PsbB subfamily. As to quaternary structure, PSII is composed of 1 copy each of membrane proteins PsbA, PsbB, PsbC, PsbD, PsbE, PsbF, PsbH, PsbI, PsbJ, PsbK, PsbL, PsbM, PsbT, PsbX, PsbY, PsbZ, Psb30/Ycf12, at least 3 peripheral proteins of the oxygen-evolving complex and a large number of cofactors. It forms dimeric complexes. Binds multiple chlorophylls. PSII binds additional chlorophylls, carotenoids and specific lipids. is required as a cofactor.

The protein localises to the plastid. It localises to the chloroplast thylakoid membrane. Its function is as follows. One of the components of the core complex of photosystem II (PSII). It binds chlorophyll and helps catalyze the primary light-induced photochemical processes of PSII. PSII is a light-driven water:plastoquinone oxidoreductase, using light energy to abstract electrons from H(2)O, generating O(2) and a proton gradient subsequently used for ATP formation. This Vitis vinifera (Grape) protein is Photosystem II CP47 reaction center protein.